The sequence spans 274 residues: 2,3,4,5-tetrahydropyridine-2,6-dicarboxylate N-succinyltransferase (274 aa).

Substrate is bound by residues Arg106 and Asp143.

The protein belongs to the transferase hexapeptide repeat family. In terms of assembly, homotrimer.

The protein localises to the cytoplasm. It carries out the reaction (S)-2,3,4,5-tetrahydrodipicolinate + succinyl-CoA + H2O = (S)-2-succinylamino-6-oxoheptanedioate + CoA. It participates in amino-acid biosynthesis; L-lysine biosynthesis via DAP pathway; LL-2,6-diaminopimelate from (S)-tetrahydrodipicolinate (succinylase route): step 1/3. The chain is 2,3,4,5-tetrahydropyridine-2,6-dicarboxylate N-succinyltransferase from Rickettsia prowazekii (strain Madrid E).